We begin with the raw amino-acid sequence, 396 residues long: NADH-ubiquinone oxidoreductase 49 kDa subunit (396 aa).

The protein belongs to the complex I 49 kDa subunit family.

It localises to the mitochondrion. It catalyses the reaction a ubiquinone + NADH + 5 H(+)(in) = a ubiquinol + NAD(+) + 4 H(+)(out). Its function is as follows. Core subunit of the mitochondrial membrane respiratory chain NADH dehydrogenase (Complex I) that is believed to belong to the minimal assembly required for catalysis. Complex I functions in the transfer of electrons from NADH to the respiratory chain. The immediate electron acceptor for the enzyme is believed to be ubiquinone. Component of the iron-sulfur (IP) fragment of the enzyme. Component of the iron-sulfur (IP) fragment of the enzyme. The sequence is that of NADH-ubiquinone oxidoreductase 49 kDa subunit (NAD7) from Reclinomonas americana.